The sequence spans 416 residues: Adenylosuccinate synthetase (416 aa).

Residues 11 to 17 and 39 to 41 each bind GTP; these read GDEGKGK and GHT. The Proton acceptor role is filled by Asp12. Mg(2+)-binding residues include Asp12 and Gly39. IMP-binding positions include 12-15, 37-40, Thr125, Arg139, Gln214, Thr229, and Arg290; these read DEGK and NAGH. His40 functions as the Proton donor in the catalytic mechanism. 286 to 292 is a substrate binding site; it reads TTTGRPR. Residues Arg292, 318-320, and 405-407 each bind GTP; these read KLD and SLG.

This sequence belongs to the adenylosuccinate synthetase family. As to quaternary structure, homodimer. The cofactor is Mg(2+).

The protein localises to the cytoplasm. The catalysed reaction is IMP + L-aspartate + GTP = N(6)-(1,2-dicarboxyethyl)-AMP + GDP + phosphate + 2 H(+). The protein operates within purine metabolism; AMP biosynthesis via de novo pathway; AMP from IMP: step 1/2. Functionally, plays an important role in the de novo pathway of purine nucleotide biosynthesis. Catalyzes the first committed step in the biosynthesis of AMP from IMP. In Picrophilus torridus (strain ATCC 700027 / DSM 9790 / JCM 10055 / NBRC 100828 / KAW 2/3), this protein is Adenylosuccinate synthetase.